Consider the following 170-residue polypeptide: Crossover junction endodeoxyribonuclease RuvC (170 aa).

Residues D11, E71, and D143 contribute to the active site. Mg(2+) is bound by residues D11, E71, and D143.

Belongs to the RuvC family. In terms of assembly, homodimer which binds Holliday junction (HJ) DNA. The HJ becomes 2-fold symmetrical on binding to RuvC with unstacked arms; it has a different conformation from HJ DNA in complex with RuvA. In the full resolvosome a probable DNA-RuvA(4)-RuvB(12)-RuvC(2) complex forms which resolves the HJ. The cofactor is Mg(2+).

It localises to the cytoplasm. The catalysed reaction is Endonucleolytic cleavage at a junction such as a reciprocal single-stranded crossover between two homologous DNA duplexes (Holliday junction).. Functionally, the RuvA-RuvB-RuvC complex processes Holliday junction (HJ) DNA during genetic recombination and DNA repair. Endonuclease that resolves HJ intermediates. Cleaves cruciform DNA by making single-stranded nicks across the HJ at symmetrical positions within the homologous arms, yielding a 5'-phosphate and a 3'-hydroxyl group; requires a central core of homology in the junction. The consensus cleavage sequence is 5'-(A/T)TT(C/G)-3'. Cleavage occurs on the 3'-side of the TT dinucleotide at the point of strand exchange. HJ branch migration catalyzed by RuvA-RuvB allows RuvC to scan DNA until it finds its consensus sequence, where it cleaves and resolves the cruciform DNA. The sequence is that of Crossover junction endodeoxyribonuclease RuvC from Sinorhizobium fredii (strain NBRC 101917 / NGR234).